Consider the following 380-residue polypeptide: Cytochrome b (380 aa).

The next 4 membrane-spanning stretches (helical) occupy residues 34–54 (FGSLLAVCLATQIITGLLLAM), 78–99 (WLIRNLHANGASFFFICIFLHI), 114–134 (WNTGVVLLLTLMATAFVGYVL), and 179–199 (FFALHFLLPFVIAGITIIHLT). Heme b is bound by residues His-84 and His-98. Residues His-183 and His-197 each coordinate heme b. His-202 is an a ubiquinone binding site. 4 helical membrane passes run 227-247 (LKDILGLTLMFIPFLTLALFS), 289-309 (LGGVLALAASVLILLLIPFLH), 321-341 (LSQILFWLLVANLLILTWIGS), and 348-368 (FIIIGQMASFSYFSILLILFP).

This sequence belongs to the cytochrome b family. In terms of assembly, the cytochrome bc1 complex contains 11 subunits: 3 respiratory subunits (MT-CYB, CYC1 and UQCRFS1), 2 core proteins (UQCRC1 and UQCRC2) and 6 low-molecular weight proteins (UQCRH/QCR6, UQCRB/QCR7, UQCRQ/QCR8, UQCR10/QCR9, UQCR11/QCR10 and a cleavage product of UQCRFS1). This cytochrome bc1 complex then forms a dimer. It depends on heme b as a cofactor.

Its subcellular location is the mitochondrion inner membrane. Component of the ubiquinol-cytochrome c reductase complex (complex III or cytochrome b-c1 complex) that is part of the mitochondrial respiratory chain. The b-c1 complex mediates electron transfer from ubiquinol to cytochrome c. Contributes to the generation of a proton gradient across the mitochondrial membrane that is then used for ATP synthesis. This Pavo muticus (Green peafowl) protein is Cytochrome b (MT-CYB).